The following is a 623-amino-acid chain: Chaperone protein HtpG (623 aa).

Residues M1–R336 form an a; substrate-binding region. The tract at residues E337–R550 is b. Residues I551 to S623 form a c region.

Belongs to the heat shock protein 90 family. In terms of assembly, homodimer.

It localises to the cytoplasm. Functionally, molecular chaperone. Has ATPase activity. The chain is Chaperone protein HtpG from Legionella pneumophila subsp. pneumophila (strain Philadelphia 1 / ATCC 33152 / DSM 7513).